Consider the following 490-residue polypeptide: Histone-lysine N-methyltransferase, H3 lysine-9 specific (490 aa).

One can recognise a Chromo domain in the interval 8–69; that stretch reads YEVERIVDEK…RKRRLKGSNS (62 aa). 2 disordered regions span residues 61–133 and 150–190; these read KRRL…TALT and KKLG…KPRN. Residues 102-114 are compositionally biased toward basic and acidic residues; that stretch reads FSRELNVKKENKK. A compositionally biased stretch (polar residues) spans 115-133; the sequence is VFSSQTTKRQSRKQSTALT. The residue at position 127 (Lys-127) is an N6,N6,N6-trimethyllysine; alternate. Lys-127 carries the post-translational modification N6-methyllysine; alternate. A compositionally biased stretch (basic and acidic residues) spans 155 to 168; it reads TRNEVKEESQKREL. The segment covering 169–185 has biased composition (polar residues); the sequence is VSNSIKEATSPKTSSIL. Residues 258-325 form the Pre-SET domain; that stretch reads SGCNCSSLGG…ECPNRVVQRG (68 aa). Residues Cys-260, Cys-262, Cys-268, Cys-276, Cys-278, Cys-307, Cys-311, Cys-313, and Cys-317 each coordinate Zn(2+). The SET domain maps to 328–452; sequence LPLEIFKTKE…PLEELTFDYA (125 aa). Residues 338-340, Tyr-381, Arg-406, and 407-410 each bind S-adenosyl-L-methionine; these read KGW and FFNH. Cys-412 is a Zn(2+) binding site. The segment at 453-472 is autoregulatory loop; the sequence is GAKDFSPVQSQKSQQNRISK. An N6,N6,N6-trimethyllysine; by autocatalysis; alternate modification is found at Lys-455. Lys-455 carries the post-translational modification N6,N6-dimethyllysine; by autocatalysis; alternate. At Lys-455 the chain carries N6-methyllysine; by autocatalysis; alternate. Lys-464 carries the post-translational modification N6-methyllysine. A Post-SET domain is found at 473 to 489; it reads LRRQCKCGSANCRGWLF. Zn(2+) contacts are provided by Cys-477, Cys-479, and Cys-484. 477–478 contributes to the S-adenosyl-L-methionine binding site; the sequence is CK.

Belongs to the class V-like SAM-binding methyltransferase superfamily. Histone-lysine methyltransferase family. Suvar3-9 subfamily. As to quaternary structure, component of the Clr4 methyltransferase complex (ClrC) composed of at least clr4, rik1, pcu4, rbx1, raf1 and raf2. The cullin pcu4, rik1, raf1, raf2 and the ring-box protein rbx1 are components of an E3 ubiquitin ligase, whose activity is essential for heterochromatin assembly. Interacts directly with pcu4. Interacts with mlo3. Post-translationally, autocatalytic methylation of specific lysine residues in an internal loop (autoregulatory loop) promote a conformational switch that enhances the H3K9me activity of clr4.

The protein localises to the nucleus. The protein resides in the cytoplasm. Its subcellular location is the cytoskeleton. It is found in the microtubule organizing center. It localises to the spindle pole body. The protein localises to the chromosome. The enzyme catalyses L-lysyl(9)-[histone H3] + 3 S-adenosyl-L-methionine = N(6),N(6),N(6)-trimethyl-L-lysyl(9)-[histone H3] + 3 S-adenosyl-L-homocysteine + 3 H(+). The catalysed reaction is N(6)-methyl-L-lysyl(9)-[histone H3] + S-adenosyl-L-methionine = N(6),N(6)-dimethyl-L-lysyl(9)-[histone H3] + S-adenosyl-L-homocysteine + H(+). It carries out the reaction N(6),N(6)-dimethyl-L-lysyl(9)-[histone H3] + S-adenosyl-L-methionine = N(6),N(6),N(6)-trimethyl-L-lysyl(9)-[histone H3] + S-adenosyl-L-homocysteine + H(+). It catalyses the reaction L-lysyl-[protein] + S-adenosyl-L-methionine = N(6)-methyl-L-lysyl-[protein] + S-adenosyl-L-homocysteine + H(+). The enzyme catalyses N(6)-methyl-L-lysyl-[protein] + S-adenosyl-L-methionine = N(6),N(6)-dimethyl-L-lysyl-[protein] + S-adenosyl-L-homocysteine + H(+). The catalysed reaction is N(6),N(6)-dimethyl-L-lysyl-[protein] + S-adenosyl-L-methionine = N(6),N(6),N(6)-trimethyl-L-lysyl-[protein] + S-adenosyl-L-homocysteine + H(+). It carries out the reaction L-lysyl(9)-[histone H3] + S-adenosyl-L-methionine = N(6)-methyl-L-lysyl(9)-[histone H3] + S-adenosyl-L-homocysteine + H(+). Its activity is regulated as follows. An internal loop (autoregulatory loop) inhibits the catalytic activity of the enzyme by blocking the histone H3K9 substrate-binding pocket. Autocatalytic methylation of specific lysine residues in this loop promote a conformational switch that enhances the H3K9me activity of clr4. Functionally, histone methyltransferase which contributes to the establishment of heterochromatin by specifically methylating histone H3 to form H3K9me. Part of the Clr4 methyltransferase complex (ClrC). ClrC preferentially ubiquitylates H3K14 and ClrC-mediated H3 ubiquitination promotes clr4 methyltransferase activity. Clr4 functions as a reader and writer of H3K9 methylation. It sets the H3K9me mark and afterwards this H3K9me mark is recognized by the chromodomains of clr4 and swi6/HP1, which then recruit additional clr4 leading to the methylation of neighboring nucleosomes. H3K9me represents a specific tag for epigenetic transcriptional repression by recruiting swi6/HP1 to methylated histones which leads to transcriptional silencing within centromeric heterochromatin, telomeres, ribosomal DNA repeats, and the silent mating-type region. Clr4 methyltransferase activity promotes the assembly of a tripartite complex composed of ClrC and complexes involved in siRNA generation. Apart from H3K9, also methylates non-histone proteins such as mlo3. Interacts with mlo3 to promote the processing of centromeric and antisense RNAs. The sequence is that of Histone-lysine N-methyltransferase, H3 lysine-9 specific (clr4) from Schizosaccharomyces pombe (strain 972 / ATCC 24843) (Fission yeast).